Here is a 615-residue protein sequence, read N- to C-terminus: MARTKNAGVPLAAEVVSQTINDEVVVASAAEVDSEATNLISNDDRADSDEETEALQPLKMYFGPSDYTKPFKITAKCYLHKAVGLLESHLEESELKWFLEHPQFKHFFHMHKDPNHKVMGMWLLFIRTTCLDKKGSMVYCQWRTDPMFGPGATIQYPDVEKKLLSMKKPSEARLRVVVLYFLCNRWKGVVADLELCKTFPWGKNAFEENYLAFEAIPVLRKNFCEDIESADPQCPRMCKMKFKSSTMKGFPMSDVYDKLGTTKSILAPTPDENLLLKRIMDKECGVNDVDDLIADGWKKRLVDEERTICFEPLFNEDVAHQSFVANNAPSTVVQAPRKAAVEKKGKGKTAAALTSPSDEGLTEVVNEMKNLMENGFKSMNKRMTNFSKKYEEQDKRLKLMETAIKSIQSSTGTDDAYGSKEIDDRENELEEGSDANGGDNEREVREKETEIDKEVAQGDNEREVGEKETEIDKEVGQGDSDIFDGNKDMELNKEVAESTIGVAESEKDKEVTESEKDKEVAESEIGVPESEKDIEVADSEKDKEVPQDDEMDGGKVTEPSKKRGKSHDDGDDPSEGCVKKPKVVKKVAKSRTDAKPVYRSPIQTRYARKKTKKNV.

S48 bears the Phosphoserine mark. Acidic residues predominate over residues 424 to 433; that stretch reads DRENELEEGS. The tract at residues 424–615 is disordered; the sequence is DRENELEEGS…YARKKTKKNV (192 aa). 4 stretches are compositionally biased toward basic and acidic residues: residues 439-476, 484-496, 504-521, and 529-561; these read DNER…KEVG, DGNK…KEVA, ESEK…KEVA, and ESEK…EPSK. Basic residues-rich tracts occupy residues 579-589 and 606-615; these read KKPKVVKKVAK and YARKKTKKNV.

This is an uncharacterized protein from Arabidopsis thaliana (Mouse-ear cress).